The following is a 463-amino-acid chain: Probable diacyglycerol O-acyltransferase tgs1 (463 aa).

The Proton acceptor role is filled by histidine 137.

The protein belongs to the long-chain O-acyltransferase family.

It catalyses the reaction an acyl-CoA + a 1,2-diacyl-sn-glycerol = a triacyl-sn-glycerol + CoA. Its pathway is glycerolipid metabolism; triacylglycerol biosynthesis. Its function is as follows. Catalyzes the terminal and only committed step in triacylglycerol synthesis by using diacylglycerol and fatty acyl CoA as substrates. Required for storage lipid synthesis. The chain is Probable diacyglycerol O-acyltransferase tgs1 (tgs1) from Mycobacterium tuberculosis (strain CDC 1551 / Oshkosh).